The sequence spans 476 residues: NAC domain-containing protein 86 (476 aa).

The NAC domain occupies 6–157 (LPPGFRFHPT…AYALCRVFKK (152 aa)). Residues 105-163 (IGTKKTLVYYRGRAPHGIRTGWVMHEYRLDESECEPSAFGMQDAYALCRVFKKIVIEAK) mediate DNA binding.

Expressed in a few sieve element cells before enucleation and in phloem-pole pericycle cells.

Its subcellular location is the nucleus. Its function is as follows. Transcription factor directing sieve element enucleation and cytosol degradation. Not required for formation of lytic vacuoles. Regulates, with NAC045, the transcription of NEN1, NEN2, NEN3, NEN4, RTM1, RTM2, UBP16, PLDZETA, ABCB10 and At1g26450. The sequence is that of NAC domain-containing protein 86 from Arabidopsis thaliana (Mouse-ear cress).